The primary structure comprises 512 residues: Probable multidrug resistance protein EmrY (512 aa).

Topologically, residues M1–P8 are cytoplasmic. Residues A9 to M29 traverse the membrane as a helical segment. Residue Q30 is a topological domain, periplasmic. The chain crosses the membrane as a helical span at residues M31–S51. At T52 to D53 the chain is on the cytoplasmic side. The chain crosses the membrane as a helical span at residues E54–G74. At R75–R84 the chain is on the periplasmic side. The next 2 helical transmembrane spans lie at L85–N105 and L106–L126. Residues S127 to T141 are Periplasmic-facing. The helical transmembrane segment at F142–G162 threads the bilayer. Over G163–G172 the chain is Cytoplasmic. The helical transmembrane segment at W173 to L193 threads the bilayer. Residues K194–K204 lie on the Periplasmic side of the membrane. The helical transmembrane segment at M205 to D225 threads the bilayer. Topologically, residues K226 to N234 are cytoplasmic. The helical transmembrane segment at S235–W255 threads the bilayer. At E256 to N273 the chain is on the periplasmic side. A helical membrane pass occupies residues F274 to L294. At M295 to A307 the chain is on the cytoplasmic side. Residues I308 to I328 form a helical membrane-spanning segment. At G329 to R338 the chain is on the periplasmic side. A helical membrane pass occupies residues L339–F359. The Cytoplasmic segment spans residues M360–D364. The chain crosses the membrane as a helical span at residues F365–P385. Residues L386–R486 are Periplasmic-facing. A helical membrane pass occupies residues M487–T507. Residues A508–G512 lie on the Cytoplasmic side of the membrane.

Belongs to the major facilitator superfamily. EmrB family. Part of the tripartite efflux system EmrYK-TolC, which is composed of an inner membrane transporter, EmrY, a membrane fusion protein, EmrK, and an outer membrane component, TolC. The complex forms a large protein conduit and can translocate molecules across both the inner and outer membranes.

The protein resides in the cell inner membrane. Functionally, part of the tripartite efflux system EmrYK-TolC, which confers resistance to various drugs. This Escherichia coli (strain K12) protein is Probable multidrug resistance protein EmrY (emrY).